The following is a 752-amino-acid chain: Exocyst complex component EXO84B (752 aa).

Disordered regions lie at residues 511-532 (QTGQ…NPEQ) and 724-752 (TKGN…HGSY). Positions 515–532 (RTDDLRRPLDRQNRNPEQ) are enriched in basic and acidic residues. Positions 733 to 752 (SPTASVSAQSVSSARSHGSY) are enriched in low complexity.

The protein belongs to the EXO84 family. The exocyst complex is composed of SEC3, SEC5, SEC6, SEC8, SEC10, EXO70A1 and EXO84B. Interacts with SEC6, SEC10, SEC15B and EXO70A1. Interacts with EXO70B1. Binds directly to B1L.

Its subcellular location is the cytoplasm. The protein resides in the cytosol. It localises to the perinuclear region. The protein localises to the cytoskeleton. It is found in the phragmoplast. Its subcellular location is the secreted. The protein resides in the cell wall. It localises to the cell membrane. Functionally, component of the exocyst complex involved in the docking of exocytic vesicles with fusion sites on the plasma membrane during regulated or polarized secretion. Involved in polarized cell growth and organ morphogenesis. During cytokinesis, involved in cell plate initiation, cell plate maturation and formation of new primary cell wall. Probable component of an exocyst subcomplex specifically involved in autophagy-related, Golgi-independent membrane traffic to the vacuole. Regulates autophagosome formation and autophagy-related Golgi-independent import into the vacuole. Mediates ABCG36/PEN3 outer-membrane polarity at the periphery of lateral root cap and root epidermal cells. This Arabidopsis thaliana (Mouse-ear cress) protein is Exocyst complex component EXO84B.